The sequence spans 412 residues: Adenosine receptor A2a (412 aa).

The Extracellular portion of the chain corresponds to 1-7; it reads MSTMGSW. A helical membrane pass occupies residues 8-32; sequence VYITVELAIAVLAILGNVLVCWAVW. At 33-42 the chain is on the cytoplasmic side; it reads LNSNLQNVTN. The helical transmembrane segment at 43–66 threads the bilayer; it reads YFVVSLAAADIAVGVLAIPFAITI. Over 67 to 77 the chain is Extracellular; it reads STGFCAACHNC. 3 cysteine pairs are disulfide-bonded: Cys-71–Cys-159, Cys-74–Cys-146, and Cys-77–Cys-166. A helical membrane pass occupies residues 78 to 100; that stretch reads LFFACFVLVLTQSSIFSLLAIAI. Over 101–120 the chain is Cytoplasmic; that stretch reads DRYIAIRIPLRYNGLVTGTR. The chain crosses the membrane as a helical span at residues 121-143; sequence AKGIIAVCWVLSFAIGLTPMLGW. At 144-173 the chain is on the extracellular side; the sequence is NNCSQPKEGRNYSQGCGEGQVACLFEDVVP. N-linked (GlcNAc...) asparagine glycans are attached at residues Asn-145 and Asn-154. An adenosine-binding site is contributed by Glu-169. A helical transmembrane segment spans residues 174 to 198; sequence MNYMVYYNFFAFVLVPLLLMLGVYL. Over 199–234 the chain is Cytoplasmic; the sequence is RIFLAARRQLKQMESQPLPGERARSTLQKEVHAAKS. A helical membrane pass occupies residues 235-258; it reads LAIIVGLFALCWLPLHIINCFTFF. Asn-253 is a binding site for adenosine. Cys-259 and Cys-262 are oxidised to a cystine. Residues 259-266 are Extracellular-facing; sequence CPECSHAP. Residues 267 to 290 traverse the membrane as a helical segment; sequence LWLMYLTIVLSHTNSVVNPFIYAY. Adenosine is bound by residues Ser-277 and His-278. The Cytoplasmic segment spans residues 291–412; it reads RIREFRQTFR…PLAQDGAGVS (122 aa). The interval 392–412 is disordered; the sequence is GACPESPGLEGPLAQDGAGVS.

The protein belongs to the G-protein coupled receptor 1 family. In terms of assembly, interacts (via cytoplasmic C-terminal domain) with USP4; the interaction is direct. May interact with DRD4. Interacts with NECAB2. Interacts (via cytoplasmic C-terminal domain) with GAS2L2; interaction enhances receptor-mediated adenylyl cyclase activity. Ubiquitinated. Deubiquitinated by USP4; leading to stabilization and expression at the cell surface.

Its subcellular location is the cell membrane. In terms of biological role, receptor for adenosine. The activity of this receptor is mediated by G proteins which activate adenylyl cyclase. The protein is Adenosine receptor A2a (ADORA2A) of Canis lupus familiaris (Dog).